The sequence spans 406 residues: Multifunctional CCA protein (406 aa).

Residues Gly8 and Arg11 each coordinate ATP. CTP contacts are provided by Gly8 and Arg11. Residues Asp21 and Asp23 each contribute to the Mg(2+) site. ATP contacts are provided by Arg91, Arg137, and Arg140. 3 residues coordinate CTP: Arg91, Arg137, and Arg140. The HD domain maps to 228 to 329 (TGIHTLMVAQ…IKILNKFDVW (102 aa)).

The protein belongs to the tRNA nucleotidyltransferase/poly(A) polymerase family. Bacterial CCA-adding enzyme type 1 subfamily. In terms of assembly, monomer. Can also form homodimers and oligomers. It depends on Mg(2+) as a cofactor. Ni(2+) is required as a cofactor.

The enzyme catalyses a tRNA precursor + 2 CTP + ATP = a tRNA with a 3' CCA end + 3 diphosphate. It catalyses the reaction a tRNA with a 3' CCA end + 2 CTP + ATP = a tRNA with a 3' CCACCA end + 3 diphosphate. Its function is as follows. Catalyzes the addition and repair of the essential 3'-terminal CCA sequence in tRNAs without using a nucleic acid template. Adds these three nucleotides in the order of C, C, and A to the tRNA nucleotide-73, using CTP and ATP as substrates and producing inorganic pyrophosphate. tRNA 3'-terminal CCA addition is required both for tRNA processing and repair. Also involved in tRNA surveillance by mediating tandem CCA addition to generate a CCACCA at the 3' terminus of unstable tRNAs. While stable tRNAs receive only 3'-terminal CCA, unstable tRNAs are marked with CCACCA and rapidly degraded. This is Multifunctional CCA protein from Vibrio campbellii (strain ATCC BAA-1116).